Reading from the N-terminus, the 767-residue chain is Golgin subfamily A member 1 (767 aa).

A disordered region spans residues 13-58 (TAVAQRPGGATRIPRSVSKESVASMGADSGDDFASDGSSSREDLSS). Residues S30, S36, S41, S47, S50, and S51 each carry the phosphoserine modification. The stretch at 50 to 657 (SSSREDLSSQ…RKTLQKELKI (608 aa)) forms a coiled coil. Residues 688 to 737 (TDAREINFEYLKHVVLKFMSCRESEAFHLIKAVSVLLNFSQEEENMLKET) enclose the GRIP domain. Residues 748-767 (KPAPKGSIRPSISNPRIPWS) are disordered.

Interacts with RAB6A. Directly interacts with TBC1D23. Interacts with FAM91A1; this interaction may be mediated by TBC1D23. Interacts with ARL1; this interaction recruits Golgin-97/GOLGA1 onto the Golgi apparatus. MARylated by PARP12; MARylation is required for basolateral export of E-Cadherin.

It localises to the golgi apparatus membrane. The protein localises to the golgi apparatus. The protein resides in the trans-Golgi network membrane. It is found in the cytoplasmic vesicle. Its subcellular location is the secretory vesicle. It localises to the acrosome. In terms of biological role, involved in vesicular trafficking at the Golgi apparatus level. Involved in endosome-to-Golgi trafficking. Mechanistically, captures transport vesicles arriving from endosomes via the protein TBC1D23. Recognized vesicles are then tethered to the trans-Golgi before subsequent SNARE engagement and vesicle fusion. Selectively regulates E-cadherin transport from the trans-Golgi network in tubulovesicular carriers. Its function is as follows. (Microbial infection) Plays an important role in poxvirus morphogenesis. Translocates into the viral factories where it may transport the membrane fragments and associated protein factors important for virus maturation to the sites of virion assembly. The polypeptide is Golgin subfamily A member 1 (GOLGA1) (Homo sapiens (Human)).